We begin with the raw amino-acid sequence, 697 residues long: Beta-galactosidase 17 (697 aa).

A signal peptide spans 1–35 (MAMTSWPSTGRQRRHQLASMLLLVLVVVGIYVPVF). The active-site Proton donor is glutamate 218. Glutamate 301 serves as the catalytic Nucleophile. 5 N-linked (GlcNAc...) asparagine glycosylation sites follow: asparagine 333, asparagine 519, asparagine 573, asparagine 583, and asparagine 690.

The protein belongs to the glycosyl hydrolase 35 family. In terms of tissue distribution, ubiquitous, with higher expression levels in roots and siliques.

The protein localises to the secreted. The protein resides in the extracellular space. Its subcellular location is the apoplast. It carries out the reaction Hydrolysis of terminal non-reducing beta-D-galactose residues in beta-D-galactosides.. The polypeptide is Beta-galactosidase 17 (BGAL17) (Arabidopsis thaliana (Mouse-ear cress)).